An 811-amino-acid polypeptide reads, in one-letter code: DEP domain-containing protein 1A (811 aa).

The DEP domain occupies 24–108 (FRAGMPLRKH…DNNQLFRFPA (85 aa)). The Rho-GAP domain maps to 281-321 (DYFLDLPEPLLTFEYYELFVNILVVCGYITVSDRSSGIHKI). A Phosphoserine modification is found at Ser512. An interaction with ZNF224 region spans residues 598-653 (AIDALQLCCLLLPPPNRRKLQLLMRMISRMSQNVDMPKLHDAMGTRSLMIHTFSRC).

In terms of assembly, isoform 2 and isoform 5 can form homodimers and heterodimers. Interacts with ZNF224. In terms of tissue distribution, expressed in testis. Up-regulated in bladder cancer cells (at protein level).

Its subcellular location is the nucleus. Functionally, may be involved in transcriptional regulation as a transcriptional corepressor. The DEPDC1A-ZNF224 complex may play a critical role in bladder carcinogenesis by repressing the transcription of the A20 gene, leading to transport of NF-KB protein into the nucleus, resulting in suppression of apoptosis of bladder cancer cells. The polypeptide is DEP domain-containing protein 1A (DEPDC1) (Homo sapiens (Human)).